Reading from the N-terminus, the 439-residue chain is Chromosomal replication initiator protein DnaA (439 aa).

The tract at residues M1–V72 is domain I, interacts with DnaA modulators. Residues V72–S99 form a domain II region. Residues G100–V322 are domain III, AAA+ region. ATP is bound by residues G144, G146, K147, and T148. The segment at K323–I439 is domain IV, binds dsDNA.

The protein belongs to the DnaA family. As to quaternary structure, oligomerizes as a right-handed, spiral filament on DNA at oriC.

Its subcellular location is the cytoplasm. Plays an essential role in the initiation and regulation of chromosomal replication. ATP-DnaA binds to the origin of replication (oriC) to initiate formation of the DNA replication initiation complex once per cell cycle. Binds the DnaA box (a 9 base pair repeat at the origin) and separates the double-stranded (ds)DNA. Forms a right-handed helical filament on oriC DNA; dsDNA binds to the exterior of the filament while single-stranded (ss)DNA is stabiized in the filament's interior. The ATP-DnaA-oriC complex binds and stabilizes one strand of the AT-rich DNA unwinding element (DUE), permitting loading of DNA polymerase. After initiation quickly degrades to an ADP-DnaA complex that is not apt for DNA replication. Binds acidic phospholipids. The protein is Chromosomal replication initiator protein DnaA of Mycoplasma pneumoniae (strain ATCC 29342 / M129 / Subtype 1) (Mycoplasmoides pneumoniae).